The sequence spans 267 residues: Neutrophil elastase (267 aa).

Residues 1–27 form the signal peptide; it reads MTLGRRLACLFLACVLPALLLGGTALA. The propeptide occupies 28 to 29; sequence SE. The region spanning 30-247 is the Peptidase S1 domain; it reads IVGGRRARPH…FVNWIDSIIQ (218 aa). A disulfide bridge connects residues cysteine 55 and cysteine 71. The active-site Charge relay system is the histidine 70. Asparagine 88 is a glycosylation site (N-linked (GlcNAc...) asparagine). Aspartate 117 functions as the Charge relay system in the catalytic mechanism. Asparagine 124 and asparagine 173 each carry an N-linked (GlcNAc...) asparagine glycan. 3 disulfides stabilise this stretch: cysteine 151–cysteine 208, cysteine 181–cysteine 187, and cysteine 198–cysteine 223. Serine 202 serves as the catalytic Charge relay system.

The protein belongs to the peptidase S1 family. Elastase subfamily. Interacts with NOTCH2NL. Interacts with agaphelin, an antihemostatic protein from Anopheles gambiae. Bone marrow cells. Neutrophil.

It localises to the cytoplasmic vesicle. It is found in the phagosome. The enzyme catalyses Hydrolysis of proteins, including elastin. Preferential cleavage: Val-|-Xaa &gt; Ala-|-Xaa.. Serine protease that modifies the functions of natural killer cells, monocytes and granulocytes. Inhibits C5a-dependent neutrophil enzyme release and chemotaxis. Promotes cleavage of GSDMB, thereby inhibiting pyroptosis. Promotes blood coagulation. Through the activation of the platelet fibrinogen receptor integrin alpha-IIb/beta-3, potentiates platelet aggregation induced by a threshold concentration of cathepsin G (CTSG). Cleaves and thus inactivates tissue factor pathway inhibitor (TFPI). Capable of killing E.coli but not S.aureus in vitro; digests outer membrane protein A (ompA) in E.coli and K.pneumoniae. The sequence is that of Neutrophil elastase (ELANE) from Homo sapiens (Human).